Here is a 258-residue protein sequence, read N- to C-terminus: Alpha-fibrinogenase-like (258 aa).

Positions 1 to 18 are cleaved as a signal peptide; it reads MVLIRVLANLLVLQLSYA. A propeptide spanning residues 19–24 is cleaved from the precursor; the sequence is QKSSEL. The Peptidase S1 domain occupies 25–249; sequence VVGGHPCNIY…YTDWIHSIIA (225 aa). Intrachain disulfides connect Cys31–Cys163, Cys50–Cys66, Cys98–Cys256, Cys142–Cys210, Cys174–Cys189, and Cys200–Cys225. N-linked (GlcNAc...) asparagine glycosylation is present at Asn44. Residues His65 and Asp110 each act as charge relay system in the active site. Ser204 acts as the Charge relay system in catalysis.

It belongs to the peptidase S1 family. Snake venom subfamily. In terms of assembly, monomer. Expressed by the venom gland.

The protein resides in the secreted. Functionally, degrades alpha chain of fibrinogen (FGA), and has strong caseinolytic activity. Cleaves oxidized insulin B-chain at '40-Tyr-|-Leu-41', '48-Phe-|-Phe-49' and '49-Phe-|-Tyr-50', and glucagon at the bonds '62-Tyr-|-Ser-63', 66-Leu-|-Asp-67' and '78-Leu-|-Met-79' bonds. This chain is Alpha-fibrinogenase-like, found in Daboia siamensis (Eastern Russel's viper).